A 112-amino-acid polypeptide reads, in one-letter code: Gastrula zinc finger protein XlCGF16.1 (112 aa).

4 C2H2-type zinc fingers span residues 6-28 (YNCSECHKRFRSKSGFVKHQKTH), 34-56 (FVCFVCEQRFVCHSALIGHQRIH), 62-84 (FSCTECGKCFSRRSHLNSHHKTH), and 90-112 (FLCFACGKCFASRSHLTAHHRTH).

This sequence belongs to the krueppel C2H2-type zinc-finger protein family.

It localises to the nucleus. Functionally, may be involved in transcriptional regulation. The protein is Gastrula zinc finger protein XlCGF16.1 of Xenopus laevis (African clawed frog).